The primary structure comprises 210 residues: Prolactin-2 (210 aa).

A signal peptide spans 1 to 23 (MARRSQGTKLHLAVLCLVVSCHA). Cystine bridges form between Cys69-Cys183 and Cys200-Cys210.

Belongs to the somatotropin/prolactin family.

Its subcellular location is the secreted. The polypeptide is Prolactin-2 (prl2) (Oncorhynchus keta (Chum salmon)).